The sequence spans 276 residues: Energy-coupling factor transporter ATP-binding protein EcfA1 (276 aa).

Positions 2-237 constitute an ABC transporter domain; it reads IEIKNLKFKY…GSELVDLGLD (236 aa). 37 to 44 contacts ATP; it reads GHNGSGKS.

It belongs to the ABC transporter superfamily. Energy-coupling factor EcfA family. As to quaternary structure, forms a stable energy-coupling factor (ECF) transporter complex composed of 2 membrane-embedded substrate-binding proteins (S component), 2 ATP-binding proteins (A component) and 2 transmembrane proteins (T component).

It is found in the cell membrane. In terms of biological role, ATP-binding (A) component of a common energy-coupling factor (ECF) ABC-transporter complex. Unlike classic ABC transporters this ECF transporter provides the energy necessary to transport a number of different substrates. The chain is Energy-coupling factor transporter ATP-binding protein EcfA1 from Streptococcus thermophilus (strain ATCC BAA-491 / LMD-9).